The following is a 296-amino-acid chain: Ribonuclease H2 subunit A (296 aa).

The region spanning P14–E236 is the RNase H type-2 domain. Positions 20, 21, and 127 each coordinate a divalent metal cation.

The protein belongs to the RNase HII family. Eukaryotic subfamily. The cofactor is Mn(2+). Mg(2+) is required as a cofactor.

It carries out the reaction Endonucleolytic cleavage to 5'-phosphomonoester.. In terms of biological role, catalytic subunit of RNase HII, an endonuclease that specifically degrades the RNA of RNA:DNA hybrids. Participates in DNA replication, possibly by mediating the removal of lagging-strand Okazaki fragment RNA primers during DNA replication. Mediates the excision of single ribonucleotides from DNA:RNA duplexes. This chain is Ribonuclease H2 subunit A, found in Arabidopsis thaliana (Mouse-ear cress).